The following is a 168-amino-acid chain: Phosphopantetheine adenylyltransferase (168 aa).

Substrate is bound at residue Thr-13. Residues 13 to 14 (TF) and His-21 contribute to the ATP site. Substrate-binding residues include Lys-45, Leu-78, and Arg-92. ATP contacts are provided by residues 93–95 (GLR), Glu-103, and 128–134 (TQFISSG).

It belongs to the bacterial CoaD family. As to quaternary structure, homohexamer. Mg(2+) serves as cofactor.

It localises to the cytoplasm. It carries out the reaction (R)-4'-phosphopantetheine + ATP + H(+) = 3'-dephospho-CoA + diphosphate. It participates in cofactor biosynthesis; coenzyme A biosynthesis; CoA from (R)-pantothenate: step 4/5. In terms of biological role, reversibly transfers an adenylyl group from ATP to 4'-phosphopantetheine, yielding dephospho-CoA (dPCoA) and pyrophosphate. This Wolbachia sp. subsp. Drosophila simulans (strain wRi) protein is Phosphopantetheine adenylyltransferase.